Reading from the N-terminus, the 186-residue chain is uncharacterized protein (186 aa).

The Cupin type-2 domain occupies 89–164; it reads LMSLGIGEDI…NTPLKLYSIY (76 aa). 117 to 124 lines the ATP pocket; it reads GIVKMGKS.

This is an uncharacterized protein from Bacillus subtilis (strain 168).